Consider the following 136-residue polypeptide: Peptide methionine sulfoxide reductase B5 (136 aa).

A MsrB domain is found at 14-135 (DEEWRAVLSP…NSVSIKFTPA (122 aa)). Zn(2+) is bound by residues C53, C56, C99, and C102. A disulfide bond links C71 and C124. Catalysis depends on C124, which acts as the Nucleophile.

The protein belongs to the MsrB Met sulfoxide reductase family. Requires Zn(2+) as cofactor.

The protein resides in the cytoplasm. It localises to the cytosol. It catalyses the reaction L-methionyl-[protein] + [thioredoxin]-disulfide + H2O = L-methionyl-(R)-S-oxide-[protein] + [thioredoxin]-dithiol. Functionally, catalyzes the reduction of methionine sulfoxide (MetSO) to methionine in proteins. Plays a protective role against oxidative stress by restoring activity to proteins that have been inactivated by methionine oxidation. MSRB family specifically reduces the MetSO R-enantiomer. The protein is Peptide methionine sulfoxide reductase B5 (MSRB5) of Oryza sativa subsp. japonica (Rice).